The following is a 179-amino-acid chain: Large ribosomal subunit protein uL5 (179 aa).

This sequence belongs to the universal ribosomal protein uL5 family. In terms of assembly, part of the 50S ribosomal subunit; part of the 5S rRNA/L5/L18/L25 subcomplex. Contacts the 5S rRNA and the P site tRNA. Forms a bridge to the 30S subunit in the 70S ribosome.

This is one of the proteins that bind and probably mediate the attachment of the 5S RNA into the large ribosomal subunit, where it forms part of the central protuberance. In the 70S ribosome it contacts protein S13 of the 30S subunit (bridge B1b), connecting the 2 subunits; this bridge is implicated in subunit movement. Contacts the P site tRNA; the 5S rRNA and some of its associated proteins might help stabilize positioning of ribosome-bound tRNAs. The sequence is that of Large ribosomal subunit protein uL5 from Shewanella sp. (strain ANA-3).